The chain runs to 476 residues: UDP-glucose 6-dehydrogenase (476 aa).

NAD(+)-binding positions include glycine 7–glycine 12, aspartate 32, arginine 37, valine 85–threonine 89, serine 126–threonine 127, and glutamate 161. Substrate is bound by residues glutamate 157–glutamate 161, lysine 216–asparagine 220, arginine 256, and glutamine 263–glycine 269. Cysteine 272 serves as the catalytic Nucleophile. Cysteine 272 to lysine 275 provides a ligand contact to NAD(+). Phenylalanine 334–lysine 335 is a binding site for substrate. Arginine 342 is a binding site for NAD(+). Position 439 (arginine 439) interacts with substrate.

The protein belongs to the UDP-glucose/GDP-mannose dehydrogenase family.

The catalysed reaction is UDP-alpha-D-glucose + 2 NAD(+) + H2O = UDP-alpha-D-glucuronate + 2 NADH + 3 H(+). It participates in nucleotide-sugar biosynthesis; UDP-alpha-D-glucuronate biosynthesis; UDP-alpha-D-glucuronate from UDP-alpha-D-glucose: step 1/1. Functionally, involved in the biosynthesis of glycosaminoglycans; hyaluronan, chondroitin sulfate and heparan sulfate. Required for wingless signaling in different tissues. This Drosophila melanogaster (Fruit fly) protein is UDP-glucose 6-dehydrogenase (sgl).